The sequence spans 105 residues: Phosphoribosyl-ATP pyrophosphatase (105 aa).

The protein belongs to the PRA-PH family.

The protein resides in the cytoplasm. The catalysed reaction is 1-(5-phospho-beta-D-ribosyl)-ATP + H2O = 1-(5-phospho-beta-D-ribosyl)-5'-AMP + diphosphate + H(+). It functions in the pathway amino-acid biosynthesis; L-histidine biosynthesis; L-histidine from 5-phospho-alpha-D-ribose 1-diphosphate: step 2/9. This is Phosphoribosyl-ATP pyrophosphatase from Roseobacter denitrificans (strain ATCC 33942 / OCh 114) (Erythrobacter sp. (strain OCh 114)).